The chain runs to 642 residues: Threonine--tRNA ligase (642 aa).

In terms of domain architecture, TGS spans 1-65 (MSDIITVTLP…DEDVKLQIFT (65 aa)). The catalytic stretch occupies residues 248 to 541 (DHRKLGKELD…LIEHFAGAFP (294 aa)). The Zn(2+) site is built by Cys-342, His-393, and His-518.

Belongs to the class-II aminoacyl-tRNA synthetase family. As to quaternary structure, homodimer. Zn(2+) serves as cofactor.

The protein localises to the cytoplasm. The enzyme catalyses tRNA(Thr) + L-threonine + ATP = L-threonyl-tRNA(Thr) + AMP + diphosphate + H(+). Functionally, catalyzes the attachment of threonine to tRNA(Thr) in a two-step reaction: L-threonine is first activated by ATP to form Thr-AMP and then transferred to the acceptor end of tRNA(Thr). Also edits incorrectly charged L-seryl-tRNA(Thr). This Myxococcus xanthus (strain DK1622) protein is Threonine--tRNA ligase.